The sequence spans 116 residues: Large ribosomal subunit protein P2 (116 aa).

The interval Gly60–Asp116 is disordered. A compositionally biased stretch (gly residues) spans Ser67–Ala87. The span at Ala91 to Glu101 shows a compositional bias: basic and acidic residues.

This sequence belongs to the eukaryotic ribosomal protein P1/P2 family. In terms of assembly, P1 and P2 exist as dimers at the large ribosomal subunit. Post-translationally, phosphorylated.

Its function is as follows. Plays an important role in the elongation step of protein synthesis. In Branchiostoma floridae (Florida lancelet), this protein is Large ribosomal subunit protein P2.